We begin with the raw amino-acid sequence, 215 residues long: FGFR1 oncogene partner 2 homolog (215 aa).

Coiled coils occupy residues 5-104 (IEKA…MSKY) and 161-185 (KEQE…ITRE). The disordered stretch occupies residues 194-215 (DASESTSLSALVTNSDLSLRKN). Polar residues predominate over residues 197–215 (ESTSLSALVTNSDLSLRKN).

The protein belongs to the SIKE family.

It is found in the cytoplasm. In terms of biological role, may be involved in wound healing pathway. The protein is FGFR1 oncogene partner 2 homolog (FGFR1OP2) of Pongo abelii (Sumatran orangutan).